Reading from the N-terminus, the 497-residue chain is Subtilisin-like protease CPC735_031240 (497 aa).

Positions 1–16 are cleaved as a signal peptide; that stretch reads MKGVLSLSLLPLLAAP. A propeptide spanning residues 17–136 is cleaved from the precursor; it reads SPILVDTIHR…IEKDSEVHAW (120 aa). The region spanning 43 to 134 is the Inhibitor I9 domain; it reads SYIVVFKKNV…QYIEKDSEVH (92 aa). The region spanning 146-452 is the Peptidase S8 domain; the sequence is PWGLARVSHR…GGSSNYTAII (307 aa). Catalysis depends on charge relay system residues Asp182 and His214. 2 N-linked (GlcNAc...) asparagine glycosylation sites follow: Asn244 and Asn284. The Charge relay system role is filled by Ser380. The N-linked (GlcNAc...) asparagine glycan is linked to Asn447.

This sequence belongs to the peptidase S8 family.

It localises to the secreted. In terms of biological role, secreted subtilisin-like serine protease with keratinolytic activity that contributes to pathogenicity. The protein is Subtilisin-like protease CPC735_031240 of Coccidioides posadasii (strain C735) (Valley fever fungus).